The sequence spans 257 residues: Enolase-phosphatase E1 (257 aa).

The Mg(2+) site is built by D16 and E18. Substrate contacts are provided by residues 150 to 151 and K184; that span reads SS. D209 contributes to the Mg(2+) binding site.

Belongs to the HAD-like hydrolase superfamily. MasA/MtnC family. In terms of assembly, monomer. Mg(2+) serves as cofactor.

It localises to the cytoplasm. The protein localises to the nucleus. It carries out the reaction 5-methylsulfanyl-2,3-dioxopentyl phosphate + H2O = 1,2-dihydroxy-5-(methylsulfanyl)pent-1-en-3-one + phosphate. It participates in amino-acid biosynthesis; L-methionine biosynthesis via salvage pathway; L-methionine from S-methyl-5-thio-alpha-D-ribose 1-phosphate: step 3/6. Its pathway is amino-acid biosynthesis; L-methionine biosynthesis via salvage pathway; L-methionine from S-methyl-5-thio-alpha-D-ribose 1-phosphate: step 4/6. In terms of biological role, bifunctional enzyme that catalyzes the enolization of 2,3-diketo-5-methylthiopentyl-1-phosphate (DK-MTP-1-P) into the intermediate 2-hydroxy-3-keto-5-methylthiopentenyl-1-phosphate (HK-MTPenyl-1-P), which is then dephosphorylated to form the acireductone 1,2-dihydroxy-3-keto-5-methylthiopentene (DHK-MTPene). This is Enolase-phosphatase E1 (Enoph1) from Mus musculus (Mouse).